Here is a 477-residue protein sequence, read N- to C-terminus: Glycogen synthase 1 (477 aa).

Lys15 serves as a coordination point for ADP-alpha-D-glucose.

The protein belongs to the glycosyltransferase 1 family. Bacterial/plant glycogen synthase subfamily.

The enzyme catalyses [(1-&gt;4)-alpha-D-glucosyl](n) + ADP-alpha-D-glucose = [(1-&gt;4)-alpha-D-glucosyl](n+1) + ADP + H(+). The protein operates within glycan biosynthesis; glycogen biosynthesis. Functionally, synthesizes alpha-1,4-glucan chains using ADP-glucose. This chain is Glycogen synthase 1 (glgA1), found in Synechocystis sp. (strain ATCC 27184 / PCC 6803 / Kazusa).